The primary structure comprises 263 residues: Probable septum site-determining protein MinC (263 aa).

The interval 107–159 (LPPSGARERPLDIKDSAPRKPAEEPSPSAGEARPEPAKAEEKPAEPVSRPTKV) is disordered. Composition is skewed to basic and acidic residues over residues 112–129 (ARER…KPAE) and 138–150 (ARPE…EKPA).

The protein belongs to the MinC family. As to quaternary structure, interacts with MinD and FtsZ.

Functionally, cell division inhibitor that blocks the formation of polar Z ring septums. Rapidly oscillates between the poles of the cell to destabilize FtsZ filaments that have formed before they mature into polar Z rings. Prevents FtsZ polymerization. This chain is Probable septum site-determining protein MinC, found in Pseudomonas aeruginosa (strain LESB58).